The primary structure comprises 337 residues: MAVEMFYDDDADLSIIQGRKVAVIGYGSQGHAHSLSLRDSGVQVKVGLKEGSKSREKAEEQGLEVDTPAEVAKWADVIMLLAPDTAQASIFTNDIEPNLEDGNALFFGHGLNIHFGLIKAPENVTVGMVAPKGPGHLVRRQFVDGKGVPCLIAIDQDPKGEGQALALSYAAAIGGARAGVIKTTFKEETETDLFGEQAVLCGGTEELIKTGFEVMVEAGYAPEMAYFEVLHELKLIVDLIYEGGIARMNYSVSDTAEFGGYLSGPRVIDADTKKRMQDILKDIQDGSFVKRLVANVEGGNKELEALRKANAEHPIEVTGKKLRDLMSWVDRPITETA.

Residues Val3 to Thr183 form the KARI N-terminal Rossmann domain. Residues Tyr26–Gln29, Lys49, Ser52, Ser54, and Asp84–Gln87 each bind NADP(+). Residue His109 is part of the active site. Gly135 serves as a coordination point for NADP(+). One can recognise a KARI C-terminal knotted domain in the interval Thr184 to Val329. 4 residues coordinate Mg(2+): Asp192, Glu196, Glu228, and Glu232. Ser253 contributes to the substrate binding site.

This sequence belongs to the ketol-acid reductoisomerase family. Mg(2+) serves as cofactor.

The catalysed reaction is (2R)-2,3-dihydroxy-3-methylbutanoate + NADP(+) = (2S)-2-acetolactate + NADPH + H(+). The enzyme catalyses (2R,3R)-2,3-dihydroxy-3-methylpentanoate + NADP(+) = (S)-2-ethyl-2-hydroxy-3-oxobutanoate + NADPH + H(+). It functions in the pathway amino-acid biosynthesis; L-isoleucine biosynthesis; L-isoleucine from 2-oxobutanoate: step 2/4. The protein operates within amino-acid biosynthesis; L-valine biosynthesis; L-valine from pyruvate: step 2/4. Involved in the biosynthesis of branched-chain amino acids (BCAA). Catalyzes an alkyl-migration followed by a ketol-acid reduction of (S)-2-acetolactate (S2AL) to yield (R)-2,3-dihydroxy-isovalerate. In the isomerase reaction, S2AL is rearranged via a Mg-dependent methyl migration to produce 3-hydroxy-3-methyl-2-ketobutyrate (HMKB). In the reductase reaction, this 2-ketoacid undergoes a metal-dependent reduction by NADPH to yield (R)-2,3-dihydroxy-isovalerate. This chain is Ketol-acid reductoisomerase (NADP(+)), found in Mycolicibacterium smegmatis (strain ATCC 700084 / mc(2)155) (Mycobacterium smegmatis).